The following is a 303-amino-acid chain: UDP-3-O-acyl-N-acetylglucosamine deacetylase (303 aa).

Residues His78, His237, and Asp241 each coordinate Zn(2+). His264 acts as the Proton donor in catalysis.

Belongs to the LpxC family. It depends on Zn(2+) as a cofactor.

The enzyme catalyses a UDP-3-O-[(3R)-3-hydroxyacyl]-N-acetyl-alpha-D-glucosamine + H2O = a UDP-3-O-[(3R)-3-hydroxyacyl]-alpha-D-glucosamine + acetate. It participates in glycolipid biosynthesis; lipid IV(A) biosynthesis; lipid IV(A) from (3R)-3-hydroxytetradecanoyl-[acyl-carrier-protein] and UDP-N-acetyl-alpha-D-glucosamine: step 2/6. Its function is as follows. Catalyzes the hydrolysis of UDP-3-O-myristoyl-N-acetylglucosamine to form UDP-3-O-myristoylglucosamine and acetate, the committed step in lipid A biosynthesis. The chain is UDP-3-O-acyl-N-acetylglucosamine deacetylase from Xanthomonas oryzae pv. oryzae (strain MAFF 311018).